Reading from the N-terminus, the 154-residue chain is Xanthine-guanine phosphoribosyltransferase (154 aa).

5-phospho-alpha-D-ribose 1-diphosphate is bound by residues 37-38 (RG), Arg-69, and 88-96 (EDLVDSGDT). GMP is bound at residue Arg-69. Residue Asp-89 coordinates Mg(2+). Residues Asp-92 and Ile-135 each coordinate guanine. Xanthine is bound by residues Asp-92 and Ile-135. GMP is bound by residues 92 to 96 (DSGDT) and 134 to 135 (WI).

The protein belongs to the purine/pyrimidine phosphoribosyltransferase family. XGPT subfamily. Homotetramer. The cofactor is Mg(2+).

The protein resides in the cell inner membrane. The enzyme catalyses GMP + diphosphate = guanine + 5-phospho-alpha-D-ribose 1-diphosphate. The catalysed reaction is XMP + diphosphate = xanthine + 5-phospho-alpha-D-ribose 1-diphosphate. It catalyses the reaction IMP + diphosphate = hypoxanthine + 5-phospho-alpha-D-ribose 1-diphosphate. The protein operates within purine metabolism; GMP biosynthesis via salvage pathway; GMP from guanine: step 1/1. It functions in the pathway purine metabolism; XMP biosynthesis via salvage pathway; XMP from xanthine: step 1/1. Functionally, purine salvage pathway enzyme that catalyzes the transfer of the ribosyl-5-phosphate group from 5-phospho-alpha-D-ribose 1-diphosphate (PRPP) to the N9 position of the 6-oxopurines guanine and xanthine to form the corresponding ribonucleotides GMP (guanosine 5'-monophosphate) and XMP (xanthosine 5'-monophosphate), with the release of PPi. To a lesser extent, also acts on hypoxanthine. The chain is Xanthine-guanine phosphoribosyltransferase from Vibrio campbellii (strain ATCC BAA-1116).